The chain runs to 82 residues: Small ribosomal subunit protein bS16 (82 aa).

The protein belongs to the bacterial ribosomal protein bS16 family.

The polypeptide is Small ribosomal subunit protein bS16 (Pasteurella multocida (strain Pm70)).